The sequence spans 1091 residues: Sodium/potassium exporting P-type ATPase 2 (1091 aa).

Topologically, residues 1-63 (MSEGTVKENN…LGDDTKIDYK (63 aa)) are cytoplasmic. Residues 64–84 (AMVLHQVCNAMIMVLVISMAI) form a helical membrane-spanning segment. At 85–90 (SFAVRD) the chain is on the extracellular side. A helical membrane pass occupies residues 91–111 (WITGGVISFVIAVNVLIGLVQ). At 112–282 (EYKATKTMNS…TNVGTPLHRK (171 aa)) the chain is on the cytoplasmic side. A helical membrane pass occupies residues 283 to 303 (LSKLAVLLFWIAVLFAIIVMA). Residues 304–312 (SQKFDVDKR) are Extracellular-facing. The helical transmembrane segment at 313-333 (VAIYAICVALSMIPSSLVVVL) threads the bilayer. Topologically, residues 334–815 (TITMSVGAAV…RRMTDNIQKF (482 aa)) are cytoplasmic. Asp-369 (4-aspartylphosphate intermediate) is an active-site residue. Positions 369 and 371 each coordinate Mg(2+). Thr-371 and Glu-483 together coordinate ATP. Residues 499-525 (ALTGEKSTNQSNENDQSSLSQHNEKPG) form a disordered region. Residues 503 to 519 (EKSTNQSNENDQSSLSQ) show a composition bias toward polar residues. ATP is bound by residues Lys-561, Arg-606, Thr-673, Gly-674, Asp-675, Arg-732, and Lys-738. Asp-757 serves as a coordination point for Mg(2+). An ATP-binding site is contributed by Asn-760. The helical transmembrane segment at 816 to 836 (VLQLLAENVAQALYLIIGLVF) threads the bilayer. The Extracellular portion of the chain corresponds to 837–848 (RDENGKSVFPLS). The helical transmembrane segment at 849-869 (PVEVLWIIVVTSCFPAMGLGL) threads the bilayer. At 870–885 (EKAAPDLMDRPPHDSE) the chain is on the cytoplasmic side. Residues 886–906 (VGIFTWEVIIDTFAYGIIMTG) form a helical membrane-spanning segment. Residues 907 to 943 (SCMASFTGSLYGINSGRLGHDCDGTYNSSCRDVYRSR) lie on the Extracellular side of the membrane. Residues 944 to 964 (SAAFATMTWCALILAWEVVDM) traverse the membrane as a helical segment. The Cytoplasmic segment spans residues 965 to 991 (RRSFFRMHPDTDSPVKEFFRSIWGNQF). A helical transmembrane segment spans residues 992–1012 (LFWSIIFGFVSAFPVVYIPVI). The Extracellular portion of the chain corresponds to 1013-1021 (NDKVFLHKP). The chain crosses the membrane as a helical span at residues 1022 to 1042 (IGAEWGLAIAFTIAFWIGAEL). Topologically, residues 1043-1091 (YKCGKRRYFKTQRAHNPENDLESNNKRDPFEAYSTSTTIHTEVNIGIKQ) are cytoplasmic.

Belongs to the cation transport ATPase (P-type) (TC 3.A.3) family. Type IID subfamily. The cofactor is Mg(2+). Post-translationally, the active site is phosphorylated in presence of sodium or potassium and in conditions of higher pH. Not phosphorylated in presence of calcium ions.

It localises to the cell membrane. The catalysed reaction is Na(+)(in) + ATP + H2O = Na(+)(out) + ADP + phosphate + H(+). It catalyses the reaction K(+)(in) + ATP + H2O = K(+)(out) + ADP + phosphate + H(+). Functionally, catalyzes the hydrolysis of ATP coupled with the export of sodium and potassium from the cell. May export potassium less efficiently. May transport other cations such as lithium. Sodium/potassium efflux ATPases are involved in salt tolerance and maintaining the membrane potential across the plasma membrane in high salinity (Na+) or alkaline (K+) environments. The protein is Sodium/potassium exporting P-type ATPase 2 of Saccharomyces cerevisiae (strain ATCC 204508 / S288c) (Baker's yeast).